The primary structure comprises 148 residues: Lysozyme-like protein 2 (148 aa).

The N-terminal stretch at 1–19 (MKAAGILTLIGCLVTGAES) is a signal peptide. The C-type lysozyme domain occupies 20–148 (KIYTRCKLAK…SDWKKDCEVS (129 aa)). 4 cysteine pairs are disulfide-bonded: C25-C145, C49-C133, C83-C98, and C94-C112. Residue E54 is part of the active site. N58 carries N-linked (GlcNAc...) asparagine glycosylation. D71 is an active-site residue.

This sequence belongs to the glycosyl hydrolase 22 family. Monomer. As to expression, expressed in testis, epididymis and placenta.

It localises to the secreted. It carries out the reaction Hydrolysis of (1-&gt;4)-beta-linkages between N-acetylmuramic acid and N-acetyl-D-glucosamine residues in a peptidoglycan and between N-acetyl-D-glucosamine residues in chitodextrins.. The polypeptide is Lysozyme-like protein 2 (LYZL2) (Homo sapiens (Human)).